Reading from the N-terminus, the 34-residue chain is Photosystem II reaction center protein Psb30 (34 aa).

The chain crosses the membrane as a helical span at residues 6–26 (IVAQLLSLALVTLSGPAVIFL).

This sequence belongs to the Psb30/Ycf12 family. As to quaternary structure, PSII is composed of 1 copy each of membrane proteins PsbA, PsbB, PsbC, PsbD, PsbE, PsbF, PsbH, PsbI, PsbJ, PsbK, PsbL, PsbM, PsbT, PsbX, PsbY, PsbZ, Psb30/Ycf12, peripheral proteins of the oxygen-evolving complex and a large number of cofactors. It forms dimeric complexes.

Its subcellular location is the plastid. The protein resides in the chloroplast thylakoid membrane. Its function is as follows. A core subunit of photosystem II (PSII), probably helps stabilize the reaction center. The sequence is that of Photosystem II reaction center protein Psb30 from Emiliania huxleyi (Coccolithophore).